Consider the following 165-residue polypeptide: Cytochrome c-type biogenesis protein CcmE (165 aa).

Topologically, residues Met-1–Arg-7 are cytoplasmic. A helical; Signal-anchor for type II membrane protein membrane pass occupies residues Leu-8–Ala-28. Residues Met-29 to Arg-165 are Periplasmic-facing. Heme-binding residues include His-122 and Tyr-126. The segment covering Gln-138–Pro-149 has biased composition (basic and acidic residues). The segment at Gln-138–Arg-165 is disordered. A compositionally biased stretch (low complexity) spans Gly-153–Arg-165.

Belongs to the CcmE/CycJ family.

The protein resides in the cell inner membrane. Heme chaperone required for the biogenesis of c-type cytochromes. Transiently binds heme delivered by CcmC and transfers the heme to apo-cytochromes in a process facilitated by CcmF and CcmH. This chain is Cytochrome c-type biogenesis protein CcmE, found in Rhodopseudomonas palustris (strain HaA2).